Here is a 143-residue protein sequence, read N- to C-terminus: Nucleoside diphosphate kinase (143 aa).

ATP contacts are provided by Lys-11, Phe-59, Arg-87, Thr-93, Arg-104, and Asn-114. His-117 acts as the Pros-phosphohistidine intermediate in catalysis.

It belongs to the NDK family. In terms of assembly, homotetramer. It depends on Mg(2+) as a cofactor.

The protein localises to the cytoplasm. The enzyme catalyses a 2'-deoxyribonucleoside 5'-diphosphate + ATP = a 2'-deoxyribonucleoside 5'-triphosphate + ADP. It catalyses the reaction a ribonucleoside 5'-diphosphate + ATP = a ribonucleoside 5'-triphosphate + ADP. Its function is as follows. Major role in the synthesis of nucleoside triphosphates other than ATP. The ATP gamma phosphate is transferred to the NDP beta phosphate via a ping-pong mechanism, using a phosphorylated active-site intermediate. This Shewanella sediminis (strain HAW-EB3) protein is Nucleoside diphosphate kinase.